A 354-amino-acid chain; its full sequence is Ferrochelatase (354 aa).

Fe cation contacts are provided by H204 and E306.

The protein belongs to the ferrochelatase family.

The protein localises to the cytoplasm. It catalyses the reaction heme b + 2 H(+) = protoporphyrin IX + Fe(2+). It functions in the pathway porphyrin-containing compound metabolism; protoheme biosynthesis; protoheme from protoporphyrin-IX: step 1/1. Catalyzes the ferrous insertion into protoporphyrin IX. This is Ferrochelatase from Coxiella burnetii (strain CbuG_Q212) (Coxiella burnetii (strain Q212)).